The sequence spans 165 residues: Anaerobic nitrite reductase GLB1 (165 aa).

The region spanning valine 12 to lysine 162 is the Globin domain. Positions glutamate 45–serine 49 match the Homodimerization motif. 6 residues coordinate heme b: serine 55, lysine 69, histidine 73, arginine 103, threonine 107, and histidine 108. The Homodimerization motif lies at aspartate 115 to glutamate 127.

This sequence belongs to the plant globin family. As to quaternary structure, homodimer. Requires heme b as cofactor. In vegetative but not in embryonic organs.

The protein resides in the cytoplasm. It localises to the nucleus. It carries out the reaction Fe(III)-heme b-[protein] + nitric oxide + H2O = Fe(II)-heme b-[protein] + nitrite + 2 H(+). Functionally, phytoglobin that reduces nitrite to nitric oxide (NO) under anoxic conditions (e.g. during flooding or in waterlogged soil). May not function as an oxygen storage or transport protein. Has an unusually high affinity for O(2) through an hexacoordinate heme iron because of a very low dissociation constant. The protein is Anaerobic nitrite reductase GLB1 (HB) of Zea mays subsp. parviglumis (Balsas teosinte).